A 606-amino-acid chain; its full sequence is Kelch-like protein 41 (606 aa).

Ser3 carries the phosphoserine modification. Residues 33–100 form the BTB domain; it reads IDCTLKAGDK…LYSASIDLND (68 aa). Positions 135–237 constitute a BACK domain; sequence CLAILRLGLL…TEKYFKDHVE (103 aa). Kelch repeat units follow at residues 346–398, 399–447, 448–495, 497–542, and 544–599; these read QIYV…EVDD, KIYV…SHKG, MIYC…VHKG, IVIA…SLAG, and LYAI…TRLN.

As to quaternary structure, interacts with NRAP. Interacts with LASP1. Part of a complex that contains CUL3, RBX1 and KLHL41. Ubiquitinated by E3 ubiquitin ligase complex formed by CUL3 and RBX1 and probably targeted for proteasome-independent degradation. Quinone-induced oxidative stress increases its ubiquitination. Sarcomeric muscle.

It is found in the cytoplasm. It localises to the cytoskeleton. The protein resides in the cell projection. The protein localises to the pseudopodium. Its subcellular location is the ruffle. It is found in the myofibril. It localises to the sarcomere. The protein resides in the m line. The protein localises to the sarcoplasmic reticulum membrane. Its subcellular location is the endoplasmic reticulum membrane. Its function is as follows. Involved in skeletal muscle development and differentiation. Regulates proliferation and differentiation of myoblasts and plays a role in myofibril assembly by promoting lateral fusion of adjacent thin fibrils into mature, wide myofibrils. Required for pseudopod elongation in transformed cells. This chain is Kelch-like protein 41 (KLHL41), found in Homo sapiens (Human).